We begin with the raw amino-acid sequence, 699 residues long: D-(-)-3-hydroxybutyrate oligomer hydrolase (699 aa).

An N-terminal signal peptide occupies residues 1–33 (MTAIRGGSRRAPGLALALLGGVLLGACHGDENA). Catalysis depends on Ser-311, which acts as the Charge relay system.

This sequence belongs to the D-(-)-3-hydroxybutyrate oligomer hydrolase family.

The protein localises to the secreted. It carries out the reaction (3R)-hydroxybutanoate dimer + H2O = 2 (R)-3-hydroxybutanoate + H(+). The protein operates within lipid metabolism; butanoate metabolism. In terms of biological role, participates in the degradation of poly-3-hydroxybutyrate (PHB). It works downstream of poly(3-hydroxybutyrate) depolymerase, hydrolyzing D(-)-3-hydroxybutyrate oligomers of various length (3HB-oligomers) into 3HB-monomers. This is D-(-)-3-hydroxybutyrate oligomer hydrolase from Burkholderia mallei (strain NCTC 10247).